Consider the following 342-residue polypeptide: MGEVLLGIETSCDETAVAILTDSGEVFAHEVLSQVEHSAYGGVVPEIAARAHYDFLQVLVKKAMSNSGLKFDDLSSIAVTAGPGLVGSLIVGVMFAKAVSYATKKPIIAVNHLEAHALVARMNQEIVFPFLVLIVSGGHCQFMLAHDVGCYSKLGGAIDDSLGEAFDKVARMLGLGYPGGPAVECKAKNGRGDRFFFPRALHNRPGCDFSFSGLKTAVRYAIEREGPLDEEMVCDICASFQECVGDILVSRIRNAIKAARQLKEGIDKLVVTGGVASNGFLRTIISQCAEDMGVTAVFPPRELCTDNGIMVAWAGVENFRKGNAVASLGFAPRARWTMESIS.

2 residues coordinate Fe cation: histidine 112 and histidine 116. Substrate is bound by residues isoleucine 134–glycine 138, aspartate 167, glycine 180, and asparagine 278. Residue aspartate 306 coordinates Fe cation.

It belongs to the KAE1 / TsaD family. Fe(2+) is required as a cofactor.

The protein localises to the cytoplasm. The catalysed reaction is L-threonylcarbamoyladenylate + adenosine(37) in tRNA = N(6)-L-threonylcarbamoyladenosine(37) in tRNA + AMP + H(+). In terms of biological role, required for the formation of a threonylcarbamoyl group on adenosine at position 37 (t(6)A37) in tRNAs that read codons beginning with adenine. Is involved in the transfer of the threonylcarbamoyl moiety of threonylcarbamoyl-AMP (TC-AMP) to the N6 group of A37, together with TsaE and TsaB. TsaD likely plays a direct catalytic role in this reaction. This chain is tRNA N6-adenosine threonylcarbamoyltransferase, found in Anaplasma phagocytophilum (strain HZ).